The primary structure comprises 1125 residues: Transcription-repair-coupling factor (1125 aa).

Positions 597–758 (DMMSFKVMDR…LIKLRDISVL (162 aa)) constitute a Helicase ATP-binding domain. 610–617 (GDVGFGKT) provides a ligand contact to ATP. The short motif at 711–714 (DEEQ) is the DEEQ box element. The 160-residue stretch at 774 to 933 (SFSELLIKHA…GFKIAMKDME (160 aa)) folds into the Helicase C-terminal domain.

In the N-terminal section; belongs to the UvrB family. The protein in the C-terminal section; belongs to the helicase family. RecG subfamily.

Its subcellular location is the cytoplasm. Couples transcription and DNA repair by recognizing RNA polymerase (RNAP) stalled at DNA lesions. Mediates ATP-dependent release of RNAP and its truncated transcript from the DNA, and recruitment of nucleotide excision repair machinery to the damaged site. This Borreliella burgdorferi (strain ATCC 35210 / DSM 4680 / CIP 102532 / B31) (Borrelia burgdorferi) protein is Transcription-repair-coupling factor.